Consider the following 572-residue polypeptide: Mitochondrial chaperone TCM62 (572 aa).

A mitochondrion-targeting transit peptide spans 1–16; the sequence is MLRNCLRKLGNHQTKC. At 17-471 the chain is on the mitochondrial matrix side; the sequence is SVKTLHTPIY…KANEPNFMTK (455 aa). The chain crosses the membrane as a helical span at residues 472–488; it reads VGINAVLSAVILPSEVA. Over 489-572 the chain is Mitochondrial intermembrane; that stretch reads FKNAYGYNYY…VYKKPERHKA (84 aa).

Belongs to the chaperonin (HSP60) family. As to quaternary structure, forms a high molecular mass protein complex of approximately 850 kDa.

Its subcellular location is the mitochondrion inner membrane. Functionally, chaperone. Required for the assembly of succinate dehydrogenase subunits. Ensures mitochondrial gene expression at elevated temperatures and prevents heat-aggregation of the ribosomal subunit VAR1. This Saccharomyces cerevisiae (strain ATCC 204508 / S288c) (Baker's yeast) protein is Mitochondrial chaperone TCM62 (TCM62).